The chain runs to 237 residues: Ribose-5-phosphate isomerase A (237 aa).

Residues 30-33 (SGST), 87-90 (DGAD), and 100-103 (KGGG) each bind substrate. Catalysis depends on Glu109, which acts as the Proton acceptor. Lys127 is a binding site for substrate.

This sequence belongs to the ribose 5-phosphate isomerase family. As to quaternary structure, homodimer.

It carries out the reaction aldehydo-D-ribose 5-phosphate = D-ribulose 5-phosphate. Its pathway is carbohydrate degradation; pentose phosphate pathway; D-ribose 5-phosphate from D-ribulose 5-phosphate (non-oxidative stage): step 1/1. Its function is as follows. Catalyzes the reversible conversion of ribose-5-phosphate to ribulose 5-phosphate. This chain is Ribose-5-phosphate isomerase A, found in Synechococcus sp. (strain RCC307).